The chain runs to 218 residues: tRNA (guanine-N(7)-)-methyltransferase (218 aa).

The S-adenosyl-L-methionine site is built by Glu-43, Asp-68, Glu-101, and Asn-124. 2 residues coordinate substrate: Lys-128 and Asp-160.

Belongs to the class I-like SAM-binding methyltransferase superfamily. TrmB family.

The enzyme catalyses guanosine(46) in tRNA + S-adenosyl-L-methionine = N(7)-methylguanosine(46) in tRNA + S-adenosyl-L-homocysteine. It functions in the pathway tRNA modification; N(7)-methylguanine-tRNA biosynthesis. Catalyzes the formation of N(7)-methylguanine at position 46 (m7G46) in tRNA. In Acetivibrio thermocellus (strain ATCC 27405 / DSM 1237 / JCM 9322 / NBRC 103400 / NCIMB 10682 / NRRL B-4536 / VPI 7372) (Clostridium thermocellum), this protein is tRNA (guanine-N(7)-)-methyltransferase.